We begin with the raw amino-acid sequence, 212 residues long: Uracil-DNA glycosylase (212 aa).

The active-site Proton acceptor is the aspartate 59.

This sequence belongs to the uracil-DNA glycosylase (UDG) superfamily. UNG family.

It is found in the cytoplasm. The catalysed reaction is Hydrolyzes single-stranded DNA or mismatched double-stranded DNA and polynucleotides, releasing free uracil.. Its function is as follows. Excises uracil residues from the DNA which can arise as a result of misincorporation of dUMP residues by DNA polymerase or due to deamination of cytosine. This is Uracil-DNA glycosylase from Ureaplasma urealyticum serovar 10 (strain ATCC 33699 / Western).